The following is a 942-amino-acid chain: MNKYEVVKLIGVGGEAKALLVKRINSDKLYVMKQRMFFLLEEANEGLCEAMSLAKIQSPYIVRFEEVFLDNNSNMFSLCIVMEYCEGGDLMDNLFKRISDSFLKNSGLNNNQNNNNNNNNNLNSIVNNNILNNNKNSKQSTTNTNSSGSNSSIASNTTNNNNNNNNINNNNNLKAYENFFSKYVPSETLKGVNQLVEPNCNKDNNKPIEITTTDSPRIIINDNESTNNLNSQSDQILQFSISSESSSFSNNDLINSPNSNDSNLHQSSSNSSICGDYSSPPNLEKISSPGTSTPYQKGSNGNTVNIRCSDIVVEAVSPIKTESIGCQIRSTTSPCTSGPTSPQMIPLNIVEQPPQSTSTSKTDSSPTGADVKKTKMTWWKTYKSSKKDKKQTICSNACESFSNSTFFNDPSSHSQPQHQQLHSSPQQLPQSPRLKPNIESSLNINGNNNNNNCSTLLKLPRKLFYTWIYQICLGVQSIHKNHLVHLDLKSENIFLSESQKIKIGDFGLAKKYENSMSGVAGTYYYLSPEILLNKNYSRPADIFSLGCIFYEMYTLNLLPLTKRSFGQELIEGKFDRKAFKQEFDDSDEPIADLILDMLNLDQNLRPTIDLILQNKLFERISDINSSFNNLLNIVNNTGSSITNSKSNSSNNLNNSNSNNDIINNNNNNNSSNNINNNNIVNLNNSYNNKQDKCEQRNKSLNQNGFLSTSSMGSISSSFNEHEFVRRQLEKNDLDAAADVLCEAFKEEPRFQFVSGATSDNLETKNKSIELGQTIRKSFFTMCVRLMFDNKFMLWGCFDYENKLIAVACWSTPGKSGAPPMTQLIVKILSMLPKFGFRTMKRIGKIMSNIDKAMKNHDSKLDVYYLPYIGVSKEYRDLGVGQYLLKPVIEWAEHQRKTVKAVVFSQKQINFFSKLGLSVGHTEKITNLKGINSIYVMSKNSQY.

In terms of domain architecture, Protein kinase spans 4-617 (YEVVKLIGVG…IDLILQNKLF (614 aa)). ATP contacts are provided by residues 10–18 (IGVGGEAKA) and Lys33. Disordered regions lie at residues 109–170 (NNNQ…INNN), 247–303 (SFSN…NGNT), 352–371 (QPPQ…GADV), and 408–445 (NDPS…LNIN). A compositionally biased stretch (low complexity) spans 258–272 (NSNDSNLHQSSSNSS). The segment covering 288–303 (SPGTSTPYQKGSNGNT) has biased composition (polar residues). Low complexity-rich tracts occupy residues 353–367 (PPQS…SSPT) and 410–432 (PSSH…PQSP). Asp487 (proton acceptor) is an active-site residue. The segment at 642 to 686 (TNSKSNSSNNLNNSNSNNDIINNNNNNNSSNNINNNNIVNLNNSY) is disordered. The stretch at 675-703 (NNNNIVNLNNSYNNKQDKCEQRNKSLNQN) forms a coiled coil.

Belongs to the protein kinase superfamily. Ser/Thr protein kinase family.

The enzyme catalyses L-seryl-[protein] + ATP = O-phospho-L-seryl-[protein] + ADP + H(+). The catalysed reaction is L-threonyl-[protein] + ATP = O-phospho-L-threonyl-[protein] + ADP + H(+). In Dictyostelium discoideum (Social amoeba), this protein is Probable serine/threonine-protein kinase DDB_G0279719.